A 236-amino-acid chain; its full sequence is Peptidase E (236 aa).

Catalysis depends on charge relay system residues Ser122, Asp137, and His159.

It belongs to the peptidase S51 family.

It localises to the cytoplasm. It carries out the reaction Dipeptidase E catalyzes the hydrolysis of dipeptides Asp-|-Xaa. It does not act on peptides with N-terminal Glu, Asn or Gln, nor does it cleave isoaspartyl peptides.. Its function is as follows. Hydrolyzes dipeptides containing N-terminal aspartate residues. May play a role in allowing the cell to use peptide aspartate to spare carbon otherwise required for the synthesis of the aspartate family of amino acids. This is Peptidase E from Shewanella sp. (strain W3-18-1).